The primary structure comprises 409 residues: tRNA (guanine-N(7)-)-methyltransferase non-catalytic subunit wuho (409 aa).

A disordered region spans residues 48-72 (DADSDSDEESTQQPQKPPTNGNGTA). Positions 58–72 (TQQPQKPPTNGNGTA) are enriched in polar residues. 4 WD repeats span residues 72 to 111 (ADNVQIVALEVHEGKSLLAVATSDKSLFLFAIDPEGDETN), 122 to 161 (MVSRTSSCMKFAASGKFLVVCDKGGDCYRYDCDDDDCKKP), 167 to 206 (GHMSQVLDVLVPDNERFIITSDRDEKIRVTNHPDCHSIET), and 210 to 252 (GHGE…EVAR).

It belongs to the WD repeat TRM82 family. As to quaternary structure, forms a heterodimer with the catalytic subunit.

Its subcellular location is the nucleus. Its pathway is tRNA modification; N(7)-methylguanine-tRNA biosynthesis. In terms of biological role, required for the formation of N(7)-methylguanine at position 46 (m7G46) in tRNA. In the complex, it is required to stabilize and induce conformational changes of the catalytic subunit. The protein is tRNA (guanine-N(7)-)-methyltransferase non-catalytic subunit wuho of Aedes aegypti (Yellowfever mosquito).